A 352-amino-acid chain; its full sequence is C-C chemokine receptor type 5 (352 aa).

Residues 1–30 (MDYQVSSPTYDIDYYTSEPCQKINVKQIAG) are Extracellular-facing. Y3 is modified (sulfotyrosine). O-linked (GalNAc...) serine glycosylation is found at S6 and S7. Sulfotyrosine occurs at positions 10, 14, and 15. Cystine bridges form between C20–C269 and C101–C178. A helical transmembrane segment spans residues 31 to 58 (RLLPPLYSLVFIFGFVGNILVVLILINC). The Cytoplasmic segment spans residues 59–68 (KRLKSMTDIY). The helical transmembrane segment at 69–89 (LLNLAISDLLFLLTVPFWAHY) threads the bilayer. The Extracellular segment spans residues 90–102 (AAAQWDFGNTMCQ). Residues 103–124 (LLTGLYFIGFFSGIFFIILLTI) traverse the membrane as a helical segment. At 125 to 141 (DRYLAIVHAVFALKART) the chain is on the cytoplasmic side. Residues 142–166 (VTFGVVTSVITWVVAVFASLPGIIF) form a helical membrane-spanning segment. Topologically, residues 167–198 (TRSQREGLHYTCSSHFPYSQYQFWKNFQTLKI) are extracellular. A helical membrane pass occupies residues 199–218 (VILGLVLPLLVMVICYSGIL). At 219 to 235 (KTLLRCRNEKKRHRAVR) the chain is on the cytoplasmic side. The chain crosses the membrane as a helical span at residues 236 to 260 (LIFTIMIVYFLFWAPYNIVLLLNTF). The Extracellular portion of the chain corresponds to 261-277 (QEFFGLNNCSSSNRLDQ). Residues 278-301 (AMQVTETLGMTHCCINPIIYAFVG) traverse the membrane as a helical segment. The Cytoplasmic portion of the chain corresponds to 302–352 (EKFRNYLLVFFQKHIAKRFCKCCSIFQQEAPERASSVYTRSTGEQEISVGL). 3 S-palmitoyl cysteine lipidation sites follow: C321, C323, and C324. S336, S337, S342, and S349 each carry phosphoserine; by BARK1.

Belongs to the G-protein coupled receptor 1 family. Interacts with PRAF2. Efficient ligand binding to CCL3/MIP-1alpha and CCL4/MIP-1beta requires sulfation, O-glycosylation and sialic acid modifications. Glycosylation on Ser-6 is required for efficient binding of CCL4. Interacts with GRK2. Interacts with ARRB1 and ARRB2. Interacts with CNIH4. Interacts with S100A4; this interaction stimulates T-lymphocyte chemotaxis. Sulfated on at least 2 of the N-terminal tyrosines. Sulfation is required for efficient binding of the chemokines, CCL3 and CCL4. In terms of processing, palmitoylation in the C-terminal is important for cell surface expression. Post-translationally, phosphorylation on serine residues in the C-terminal is stimulated by binding CC chemokines especially by APO-RANTES. O-glycosylated, but not N-glycosylated. Ser-6 appears to be the major site even if Ser-7 may be also O-glycosylated. Also sialylated glycans present which contribute to chemokine binding. Thr-16 and Ser-17 may also be glycosylated and, if so, with small moieties such as a T-antigen.

Its subcellular location is the cell membrane. Its function is as follows. Receptor for a number of inflammatory CC-chemokines including CCL3/MIP-1-alpha, CCL4/MIP-1-beta and RANTES and subsequently transduces a signal by increasing the intracellular calcium ion level. May play a role in the control of granulocytic lineage proliferation or differentiation. Participates in T-lymphocyte migration to the infection site by acting as a chemotactic receptor. This is C-C chemokine receptor type 5 (CCR5) from Theropithecus gelada (Gelada baboon).